The primary structure comprises 3011 residues: MSTNPKPQRKTKRNTNRRPQNVKFPGGGQIVGGVCLLPRRGPRVGVRATRKTSERSQPRGRRQPIPKARRPEGRSWAQPGYPWPLYGNEGCGWAGWLLSPRGSRPSRGPSDPRRRSRNLGKVIDTLTCGFADLMGYIPLVGAPLGGAARALAHGVRVLEDGVNYATGNLPGCSFSIFLLALLSCLTVPASAVEVRNSSGIYHVTNDCPNASVVYETDSLIIHLPGCVPCVREGNASRCWVSLSPTVAAKDPGVPVNEIRRHVDLIVGAAAFCSAMYVGDLCGSIFLVGQLFTLSPRRHWTTQDCNCSIYPGHVTGHRMAWDMMMNWSPTGALVVAQLLRIPQAVLDMIAGAHWGVLAGPAYYSMVGNWAKVLVVLLLFAGVDATTQVTGGTAGRNAYRLASLFSTGPSQNIQLINSNGSWHINRTALNCNDSLHTGWVAALFYSHKFNSSGRPERMASCRPLTAFDQGWGPITYGGKASNDQRPYCWHYAPRPCGIVPAKEVCGPVYCFTPSPVVVGTTDKYGVPTYTWGENETDVLLLNNSRPPIGNWFGCTWMNSTGFTKTCGAPACNVGGSETNTLSCPTDCFRRHPDATYAKCGSGPWLNPRCMVDYPYRLWHYPCTVNYTIFKIRMFVGGIEHRLTAACNWTRGERCDLDDRDRAELSPLLLSTTQWQVLPCSFTTLPALSTGLIHLHQNIVDVQYLYGLSSVVTSWAIRWEYVVLLFLLLADARICACLWMMLLISQVEAALENLIVLNAASLAGTHGIVPFFIFFCAAWYLKGKWAPGLVYSVYGMWPLLLLLLALPQRAYALDQELAASCGAVVFISLAVLTLSPYYKQYMARGIWWLQYMLTRAEALLHVWVPSLNARGGRDGAILLMCVLHPHLLFDITKIMLAILGPLWILQASLLRVPYFVRAHGLIRLCMLVRKTAGGHYVQMALLKLGALTGTYIYNHLSPLQDWAHGSLRDLAVATEPVIFSRMEIKTITWGADTAACGDIINGLPVSARRGREVLLGPADALTDKGWRLLAPITAYAQQTRGLLGCIVTSLTGRDKNQVEGEIQIVSTATQTFLATCINGACWTVYHGAGSRTIASASGPVVRMYTNVDQDLVGWPAPQGARSLTPCTCGASDLYLVTRHADVIPVRRRGDNRGSLLSPRPISYLKGSSGGPLLCPMGHVAGIFRAAVCTRGVAKAVDFVPVESLETTMRSPVFTDNSSPPTVPQSYQVAHLHAPTGSGKSTKVPAAYAAQGYKVLVLNPSVAATLGFGAYMSKAHGIDPNVRTGVRTITTGSPITYSTYGKFLADGGCPGGAYDIIICDECHSVDATSILGIGTVLDQAETAGVRLTVLATATPPGLVTVPHSNIEEVALSADGEKPFYGKAIPLNYIKGGRHLIFCHSKKKCDELAAKLVGLGVNAVAFYRGLDVSVIPTTGDVVVVATDALMTGFTGDFDSVIDCNTCVVQTVDFSLDPIFSIETSTVPQDAVSRSQRRGRTGRGKHGIYRYVSPGERPSGMFDSVVLCECYDAGCAWYELTPAETTVRLRAYLNTPGLPVCQDHLEFWESVFTGLTHIDAHFLSQTKQSGENFPYLVAYQATVCARARAPPPSWDQMWKCLIRLKPTLTGATPLLYRLGSVQNEITLTHPITQYIMACMSADLEVVTSTWVLVGGVLAALAAYCLSTGSVVIVGRIILGGKPAVIPDREVLYREFDEMEECAAHVPYLEQGMHLAGQFKQKALGLLQTASKQAETITPTVRTNWQKLESFWAKHMWNFVSGIQYLAGLSTLPGNPAIASLMSFTAAVTSPLTTQQTLFFNILGGWVAAQLASPAAATAFVGAGITGAVVGSVGLGKVLVDIIAGYGAGVAGALVAFKIMSGETPTTEDLVNLLPAILSPGALVVGVVCAAILRRHVGPGEGAVQWMNRLIAFASRGNHVSPTHYVPESDASARVTQILTSLTVTQLLKRLHVWISSDCIAPCASSWLKDVWDWICEVLSDFKNWLKAKLVPQLPGIPFVSCQRGYRGVWRGEGIVHTRCPCGANITGHVKNGSMRIVGPKTCSNTWRGSFPINAYTTGPCTPSPAPNYTFALWRVSAEEYVEVRRLGDFHYVTGVTTDKLKCPCQVPSPEFFTEVDGVRLHRYAPPCKPLLREEVTFSIGLNEYLVGSQLPCEPEPDVAVLTSMLTDPSHITAETAARRLKRGSPPSLASSSASQLSAPSLKATCTTHHDSPDADLIEANLLWRQEMGGNITRVESENKIVVLDSFDPLVAEEDDREISIPAEILRKFKQFPPAMPIWARPDYNPPLVEPWKRPDYEPPLVHGCPLPPPKPTPVPPPRRKRTVVLDESTVSSALAELATKTFGSSTTSGVTSGEATESSPAPSCGGELDSEAESYSSMPPLEGEPGDPDLSDGSWSTVSSDGGTEDVVCCSMSYSWTGALITPCASEEAKLPINALSNSLLRHHNLVYSTTSRSAGQRQKKVTFDRVQVLDDHYRDVLKEAKAKASTVKARLLSVEEACSLTPPHSARSKFGYGAKDVRSHSSKAIRHINSVWQDLLEDNTTPIDTTIMAKNEVFCVKPEKGGRKPARLIVYPDLGVRVCEKRALYDVVKQLPIAVMGASYGFQYSPAQRVDFLLKAWKSKKVPMGFSYDTRCFDSTVTEADIRTEEDLYQSCDLAPEARIAIRSLTERLYIGGPLTNSKGQNCGYRRCRASGVLTTSCGNTITCFLKASAACRAAKLQDCTMLVCGDDLVVICESAGVQEDAASLRAFTEAMTRYSAPPGDPPQPEYDLELITSCSSNVSVARDGAGKRVYYLTRDPETPLARAAWETARHTPVNSWLGNIIMFAPTLWVRMVLMTHFFSILIAQEHLGKALDCEIYGAVHSVQPLDLPEIIQRLHSLSAFSLHSYSPGEINRVAACLRKLGVPPLRAWRHRARSVRATLLSQGGKAAICGKYLFNWAVKTKLKLTPLPSMSQLDLSNWFTGGYSGGDIYHSVSHARPRLFLWCLLLLSVGVGIYLLPNR.

S2 is modified (N-acetylserine; by host). The segment at 2–23 (STNPKPQRKTKRNTNRRPQNVK) is interaction with STAT1. Residues 2-58 (STNPKPQRKTKRNTNRRPQNVKFPGGGQIVGGVCLLPRRGPRVGVRATRKTSERSQP) are interaction with EIF2AK2/PKR. Positions 2–59 (STNPKPQRKTKRNTNRRPQNVKFPGGGQIVGGVCLLPRRGPRVGVRATRKTSERSQPR) are interaction with DDX3X. Positions 2–75 (STNPKPQRKT…PKARRPEGRS (74 aa)) are disordered. Over 2 to 168 (STNPKPQRKT…EDGVNYATGN (167 aa)) the chain is Cytoplasmic. 2 consecutive short sequence motifs (nuclear localization signal) follow at residues 5 to 13 (PKPQRKTKR) and 38 to 43 (PRRGPR). A compositionally biased stretch (basic residues) spans 7–16 (PQRKTKRNTN). S53 is modified (phosphoserine; by host). 2 short sequence motifs (nuclear localization signal) span residues 58–64 (PRGRRQP) and 66–71 (PKARRP). Positions 58–68 (PRGRRQPIPKA) are enriched in basic residues. S99 carries the phosphoserine; by host modification. An important for endoplasmic reticulum and mitochondrial localization region spans residues 112 to 152 (PRRRSRNLGKVIDTLTCGFADLMGYIPLVGAPLGGAARALA). S116 carries the phosphoserine; by host PKA modification. The interval 122-173 (VIDTLTCGFADLMGYIPLVGAPLGGAARALAHGVRVLEDGVNYATGNLPGCS) is interaction with APOA2. Residues 164–167 (YATG) are important for lipid droplets localization. The chain crosses the membrane as a helical span at residues 169–189 (LPGCSFSIFLLALLSCLTVPA). The propeptide at 178–191 (LLALLSCLTVPASA) is ER anchor for the core protein, removed in mature form by host signal peptidase. Residues 190 to 358 (SAVEVRNSSG…AGAHWGVLAG (169 aa)) are Lumenal-facing. N-linked (GlcNAc...) asparagine; by host glycosylation is found at N196, N209, and N234. Residues 265-296 (IVGAAAFCSAMYVGDLCGSIFLVGQLFTLSPR) form an important for fusion region. N305 carries N-linked (GlcNAc...) asparagine; by host glycosylation. Residues 359-379 (PAYYSMVGNWAKVLVVLLLFA) traverse the membrane as a helical segment. At 380–725 (GVDATTQVTG…WEYVVLLFLL (346 aa)) the chain is on the lumenal side. An HVR1 region spans residues 385–411 (TQVTGGTAGRNAYRLASLFSTGPSQNI). N-linked (GlcNAc...) (high mannose) asparagine; by host glycosylation is found at N417, N423, N430, and N448. Disulfide bonds link C429–C552, C486–C494, and C503–C508. The tract at residues 474–479 (YGGKAS) is HVR2. The interval 480-493 (NDQRPYCWHYAPRP) is CD81-binding 1. N-linked (GlcNAc...) (high mannose) asparagine; by host glycosylation is present at N532. N-linked (GlcNAc...) asparagine; by host glycosylation occurs at N540. The CD81-binding 2 stretch occupies residues 544-551 (PPIGNWFG). N556 carries an N-linked (GlcNAc...) (high mannose) asparagine; by host glycan. 4 disulfide bridges follow: C564-C569, C581-C585, C597-C620, and C607-C644. N-linked (GlcNAc...) (high mannose) asparagine; by host glycans are attached at residues N623 and N645. A disulfide bridge connects residues C652 and C677. A PKR/eIF2-alpha phosphorylation homology domain (PePHD) region spans residues 660-671 (AELSPLLLSTTQ). The helical transmembrane segment at 726–746 (LADARICACLWMMLLISQVEA) threads the bilayer. Residues 747–757 (ALENLIVLNAA) are Lumenal-facing. A helical transmembrane segment spans residues 758–778 (SLAGTHGIVPFFIFFCAAWYL). Residues 779 to 781 (KGK) are Cytoplasmic-facing. The chain crosses the membrane as a helical span at residues 782–803 (WAPGLVYSVYGMWPLLLLLLAL). Residues 804–813 (PQRAYALDQE) are Lumenal-facing. The helical transmembrane segment at 814–834 (LAASCGAVVFISLAVLTLSPY) threads the bilayer. Topologically, residues 835–838 (YKQY) are cytoplasmic. Residues 839-859 (MARGIWWLQYMLTRAEALLHV) traverse the membrane as a helical segment. The Lumenal portion of the chain corresponds to 860–881 (WVPSLNARGGRDGAILLMCVLH). Residues 882-902 (PHLLFDITKIMLAILGPLWIL) traverse the membrane as a helical segment. Residues 903–1026 (QASLLRVPYF…ALTDKGWRLL (124 aa)) form the Peptidase C18 domain. Residues 903–1657 (QASLLRVPYF…CMSADLEVVT (755 aa)) are Cytoplasmic-facing. The interval 904 to 1206 (ASLLRVPYFV…PVESLETTMR (303 aa)) is protease NS2-3. C922 carries the S-palmitoyl cysteine; by host lipid modification. The interaction with host SCPS1 stretch occupies residues 929 to 949 (AGGHYVQMALLKLGALTGTYI). Residues H952, E972, and C993 each act as for protease NS2 activity; shared with dimeric partner in the active site. Residues 1027–1208 (APITAYAQQT…ESLETTMRSP (182 aa)) enclose the Peptidase S29 domain. Residues H1083 and D1107 each act as charge relay system; for serine protease NS3 activity in the active site. Positions 1123 and 1125 each coordinate Zn(2+). The active-site Charge relay system; for serine protease NS3 activity is S1165. Residues C1171 and H1175 each coordinate Zn(2+). The Helicase ATP-binding domain occupies 1217–1369 (PTVPQSYQVA…SNIEEVALSA (153 aa)). 1230–1237 (APTGSGKS) is a binding site for ATP. Positions 1237 and 1317 each coordinate Mg(2+). A DECH box motif is present at residues 1316–1319 (DECH). Positions 1486–1497 (QRRGRTGRGKHG) are RNA-binding. Residues 1658-1678 (STWVLVGGVLAALAAYCLSTG) traverse the membrane as a helical segment. The tract at residues 1679–1690 (SVVIVGRIILGG) is NS3-binding. Topologically, residues 1679-1805 (SVVIVGRIIL…AVTSPLTTQQ (127 aa)) are cytoplasmic. A helical transmembrane segment spans residues 1806–1824 (TLFFNILGGWVAAQLASPA). Residues 1825–1828 (AATA) lie on the Lumenal side of the membrane. A helical membrane pass occupies residues 1829–1849 (FVGAGITGAVVGSVGLGKVLV). Residue D1850 is a topological domain, cytoplasmic. A helical transmembrane segment spans residues 1851–1871 (IIAGYGAGVAGALVAFKIMSG). The Lumenal segment spans residues 1872–1881 (ETPTTEDLVN). The helical transmembrane segment at 1882–1902 (LLPAILSPGALVVGVVCAAIL) threads the bilayer. Residues 1903 to 1972 (RRHVGPGEGA…WISSDCIAPC (70 aa)) lie on the Cytoplasmic side of the membrane. 2 S-palmitoyl cysteine; by host lipidation sites follow: C1968 and C1972. Residues 1973-2002 (ASSWLKDVWDWICEVLSDFKNWLKAKLVPQ) lie within the membrane without spanning it. The Cytoplasmic segment spans residues 2003-2990 (LPGIPFVSCQ…YHSVSHARPR (988 aa)). C2011, C2029, C2031, and C2052 together coordinate Zn(2+). Residues 2120–2208 (EFFTEVDGVR…ASSSASQLSA (89 aa)) are FKBP8-binding. Residues 2120 to 2332 (EFFTEVDGVR…PVPPPRRKRT (213 aa)) form a transcriptional activation region. The tract at residues 2135-2139 (PPCKP) is interaction with non-structural protein 4A. The interval 2187–2219 (ARRLKRGSPPSLASSSASQLSAPSLKATCTTHH) is disordered. The interaction with host SKP2 stretch occupies residues 2189–2441 (RLKRGSPPSL…TPCASEEAKL (253 aa)). Position 2194 is a phosphoserine; by host; in p56 (S2194). Residues 2194-2211 (SPPSLASSSASQLSAPSL) are compositionally biased toward low complexity. S2197, S2201, S2204, S2207, and S2210 each carry phosphoserine; by host; in p58. An ISDR region spans residues 2210-2249 (SLKATCTTHHDSPDADLIEANLLWRQEMGGNITRVESENK). The interaction with EIF2AK2/PKR stretch occupies residues 2210–2275 (SLKATCTTHH…REISIPAEIL (66 aa)). The tract at residues 2249-2306 (KIVVLDSFDPLVAEEDDREISIPAEILRKFKQFPPAMPIWARPDYNPPLVEPWKRPDY) is NS4B-binding. The SH3-binding motif lies at 2322 to 2325 (TPVP). The short motif at 2326–2334 (PPRRKRTVV) is the Nuclear localization signal element. Residue K2350 forms a Glycyl lysine isopeptide (Lys-Gly) (interchain with G-Cter in ubiquitin) linkage. The span at 2352–2369 (FGSSTTSGVTSGEATESS) shows a compositional bias: low complexity. The interval 2352 to 2409 (FGSSTTSGVTSGEATESSPAPSCGGELDSEAESYSSMPPLEGEPGDPDLSDGSWSTVS) is disordered. The segment at 2354 to 2377 (SSTTSGVTSGEATESSPAPSCGGE) is V3. 2 positions are modified to phosphoserine; by host: S2449 and S2462. Residues 2634–2752 (PMGFSYDTRC…ICESAGVQED (119 aa)) form the RdRp catalytic domain. Mg(2+) contacts are provided by D2640, D2738, and D2739. A helical membrane pass occupies residues 2991–3011 (LFLWCLLLLSVGVGIYLLPNR).

Belongs to the hepacivirus polyprotein family. Homooligomer. Interacts with E1 (via C-terminus). Interacts with the non-structural protein 5A. Interacts (via N-terminus) with host STAT1 (via SH2 domain); this interaction results in decreased STAT1 phosphorylation and ubiquitin-mediated proteasome-dependent STAT1 degradation, leading to decreased IFN-stimulated gene transcription. Interacts with host STAT3; this interaction constitutively activates STAT3. Interacts with host LTBR receptor. Interacts with host TNFRSF1A receptor and possibly induces apoptosis. Interacts with host HNRPK. Interacts with host YWHAE. Interacts with host UBE3A/E6AP. Interacts with host DDX3X. Interacts with host APOA2. Interacts with host RXRA protein. Interacts with host SP110 isoform 3/Sp110b; this interaction sequesters the transcriptional corepressor SP110 away from the nucleus. Interacts with host CREB3 nuclear transcription protein; this interaction triggers cell transformation. Interacts with host ACY3. Interacts with host C1QR1. Interacts with host RBM24; this interaction, which enhances the interaction of the mature core protein with 5'-UTR, may inhibit viral translation and favor replication. Interacts with host EIF2AK2/PKR; this interaction induces the autophosphorylation of EIF2AK2. Part of the viral assembly initiation complex composed of NS2, E1, E2, NS3, NS4A, NS5A and the mature core protein. As to quaternary structure, forms a heterodimer with envelope glycoprotein E2. Interacts with mature core protein. Interacts with protease NS2. The heterodimer E1/E2 interacts with host CLDN1; this interaction plays a role in viral entry into host cell. Interacts with host SPSB2 (via C-terminus). Part of the viral assembly initiation complex composed of NS2, E1, E2, NS3, NS4A, NS5A and the mature core protein. Interacts with host NEURL3; this interaction prevents E1 binding to glycoprotein E2. In terms of assembly, forms a heterodimer with envelope glycoprotein E1. Interacts with host CD81 and SCARB1 receptors; these interactions play a role in viral entry into host cell. Interacts with host EIF2AK2/PKR; this interaction inhibits EIF2AK2 and probably allows the virus to evade the innate immune response. Interacts with host CD209/DC-SIGN and CLEC4M/DC-SIGNR. Interact with host SPCS1; this interaction is essential for viral particle assembly. Interacts with protease NS2. The heterodimer E1/E2 interacts with host CLDN1; this interaction plays a role in viral entry into host cell. Part of the viral assembly initiation complex composed of NS2, E1, E2, NS3, NS4A, NS5A and the mature core protein. Interacts with host SLC3A2/4F2hc; the interaction may facilitate viral entry into host cell. Interacts with human PLSCR1. Homohexamer. Homoheptamer. Interacts with protease NS2. As to quaternary structure, homodimer. Interacts with host SPCS1; this interaction is essential for viral particle assembly. Interacts with envelope glycoprotein E1. Interacts with envelope glycoprotein E2. Interacts with viroporin p7. Interacts with serine protease/helicase NS3. Part of the replication complex composed of NS2, NS3, NS4A, NS4B, NS5A and the RNA-directed RNA polymerase embedded in an ER-derived membranous web. Part of the viral assembly initiation complex composed of NS2, E1, E2, NS3, NS4A, NS5A and the mature core protein. In terms of assembly, interacts with protease NS2. Interacts with non-structural protein 4A; this interaction stabilizes the folding of NS3 serine protease. NS3-NS4A interaction is essential for NS3 activation and allows membrane anchorage of the latter. NS3/NS4A complex also prevents phosphorylation of host IRF3, thus preventing the establishment of dsRNA induced antiviral state. Interacts with host MAVS; this interaction leads to the cleavage and inhibition of host MAVS. Interacts with host TICAM1; this interaction leads to the cleavage and inhibition of host TICAM1. Interacts with host TANK-binding kinase/TBK1; this interaction results in the inhibition of the association between TBK1 and IRF3, which leads to the inhibition of IRF3 activation. Interacts with host RBM24. Part of the replication complex composed of NS2, NS3, NS4A, NS4B, NS5A and the RNA-directed RNA polymerase embedded in an ER-derived membranous web. Part of the viral assembly initiation complex composed of NS2, E1, E2, NS3, NS4A, NS5A and the mature core protein. Interacts with NS3 serine protease; this interaction stabilizes the folding of NS3 serine protease. NS3-NS4A interaction is essential for NS3 activation and allows membrane anchorage of the latter. Interacts with non-structural protein 5A (via N-terminus). Part of the replication complex composed of NS2, NS3, NS4A, NS4B, NS5A and the RNA-directed RNA polymerase embedded in an ER-derived membranous web. Part of the viral assembly initiation complex composed of NS2, E1, E2, NS3, NS4A, NS5A and the mature core protein. As to quaternary structure, homomultimer. Interacts with non-structural protein NS5A. Interacts with host PLA2G4C; this interaction likely initiates the recruitment of replication complexes to lipid droplets. Interacts with host STING; this interaction disrupts the interaction between STING and TBK1 thereby suppressing the interferon signaling. Part of the replication complex composed of NS2, NS3, NS4A, NS4B, NS5A and the RNA-directed RNA polymerase embedded in an ER-derived membranous web. In terms of assembly, monomer. Homodimer; dimerization is required for RNA-binding. Interacts with the mature core protein. Interacts (via N-terminus) with non-structural protein 4A. Interacts with non-structural protein 4B. Interacts (via region D2) with RNA-directed RNA polymerase. Part of the viral assembly initiation complex composed of NS2, E1, E2, NS3, NS4A, NS5A and the mature core protein. Part of the replication complex composed of NS2, NS3, NS4A, NS4B, NS5A and the RNA-directed RNA polymerase embedded in an ER-derived membranous web. Interacts with host GRB2. Interacts with host BIN1. Interacts with host PIK3R1. Interacts with host SRCAP. Interacts with host FKBP8. Interacts (via C-terminus) with host VAPB (via MSP domain). Interacts with host EIF2AK2/PKR; this interaction leads to disruption of EIF2AK2 dimerization by NS5A and probably allows the virus to evade the innate immune response. Interacts (via N-terminus) with host PACSIN2 (via N-terminus); this interaction attenuates protein kinase C alpha-mediated phosphorylation of PACSIN2 by disrupting the interaction between PACSIN2 and PRKCA. Interacts (via N-terminus) with host SRC kinase (via SH2 domain). Interacts with most Src-family kinases. Interacts with host IFI27 and SKP2; promotes the ubiquitin-mediated proteasomal degradation of NS5A. Interacts with host GPS2. Interacts with host TNFRSF21; this interaction allows the modulation by the virus of JNK, p38 MAPK, STAT3, and Akt signaling pathways in a DR6-dependent manner. Interacts (via N-terminus) with host CIDEB (via N-terminus); this interaction seems to regulate the association of HCV particles with APOE. Interacts with host CHKA/Choline Kinase-alpha; CHKA bridges host PI4KA and NS5A and potentiates NS5A-stimulated PI4KA activity, which then facilitates the targeting of the ternary complex to the ER for viral replication. Interacts with host SPSB2 (via C-terminus); this interaction targets NS5A for ubiquitination and degradation. Interacts with host RAB18; this interaction may promote the association of NS5A and other replicase components with lipid droplets. Interacts (via region D2) with host PPIA/CYPA; the interaction stimulates RNA-binding ability of NS5A and is dependent on the peptidyl-prolyl cis-trans isomerase activity of PPIA/CYPA. Interacts with host TRIM14; this interaction induces the degradation of NS5A. Homooligomer. Interacts with non-structural protein 5A. Interacts with host VAPB. Interacts with host PRK2/PKN2. Interacts with host HNRNPA1 and SEPT6; these interactions facilitate viral replication. Part of the replication complex composed of NS2, NS3, NS4A, NS4B, NS5A and the RNA-directed RNA polymerase. The cofactor is Zn(2+). It depends on Mg(2+) as a cofactor. In terms of processing, specific enzymatic cleavages in vivo yield mature proteins. The structural proteins, core, E1, E2 and p7 are produced by proteolytic processing by host signal peptidases. The core protein precursor is synthesized as a 23 kDa, which is retained in the ER membrane through the hydrophobic signal peptide. Cleavage by the signal peptidase releases the 21 kDa mature core protein. The cleavage of the core protein precursor occurs between aminoacids 176 and 188 but the exact cleavage site is not known. Some degraded forms of the core protein appear as well during the course of infection. The other proteins (p7, NS2, NS3, NS4A, NS4B, NS5A and NS5B) are cleaved by the viral proteases. Autoprocessing between NS2 and NS3 is mediated by the NS2 cysteine protease catalytic domain and regulated by the NS3 N-terminal domain. Post-translationally, phosphorylated by host PKC and PKA. Ubiquitinated; mediated by UBE3A and leading to core protein subsequent proteasomal degradation. In terms of processing, highly N-glycosylated. Post-translationally, palmitoylation is required for NS2/3 autoprocessing and E2 recruitment to membranes. Palmitoylated. This modification may play a role in its polymerization or in protein-protein interactions. In terms of processing, phosphorylated on serines in a basal form termed p56. p58 is a hyperphosphorylated form of p56. p56 and p58 coexist in the cell in roughly equivalent amounts. Hyperphosphorylation is dependent on the presence of NS4A. Host CSNK1A1/CKI-alpha or RPS6KB1 kinases may be responsible for NS5A phosphorylation. Post-translationally, tyrosine phosphorylation is essential for the interaction with host SRC. The N-terminus is phosphorylated by host PRK2/PKN2.

It is found in the host endoplasmic reticulum membrane. The protein localises to the host mitochondrion membrane. The protein resides in the virion. Its subcellular location is the host cytoplasm. It localises to the host nucleus. It is found in the host lipid droplet. The protein localises to the virion membrane. The protein resides in the host mitochondrion. Its subcellular location is the host cell membrane. It localises to the host perinuclear region. It catalyses the reaction Hydrolysis of four peptide bonds in the viral precursor polyprotein, commonly with Asp or Glu in the P6 position, Cys or Thr in P1 and Ser or Ala in P1'.. It carries out the reaction a ribonucleoside 5'-triphosphate + H2O = a ribonucleoside 5'-diphosphate + phosphate + H(+). The enzyme catalyses ATP + H2O = ADP + phosphate + H(+). The catalysed reaction is RNA(n) + a ribonucleoside 5'-triphosphate = RNA(n+1) + diphosphate. Its activity is regulated as follows. Inhibited by the antiviral drug hexamethylene amiloride. Inhibition by amantadine appears to be genotype-dependent. Also inhibited by long-alkyl-chain iminosugar derivatives. Activity is up-regulated by PRK2/PKN2-mediated phosphorylation. In terms of biological role, packages viral RNA to form a viral nucleocapsid, and promotes virion budding. Participates in the viral particle production as a result of its interaction with the non-structural protein 5A. Binds RNA and may function as a RNA chaperone to induce the RNA structural rearrangements taking place during virus replication. Modulates viral translation initiation by interacting with viral IRES and 40S ribosomal subunit. Affects various cell signaling pathways, host immunity and lipid metabolism. Prevents the establishment of cellular antiviral state by blocking the interferon-alpha/beta (IFN-alpha/beta) and IFN-gamma signaling pathways and by blocking the formation of phosphorylated STAT1 and promoting ubiquitin-mediated proteasome-dependent degradation of STAT1. Activates STAT3 leading to cellular transformation. Regulates the activity of cellular genes, including c-myc and c-fos. May repress the promoter of p53, and sequester CREB3 and SP110 isoform 3/Sp110b in the cytoplasm. Represses cell cycle negative regulating factor CDKN1A, thereby interrupting an important check point of normal cell cycle regulation. Targets transcription factors involved in the regulation of inflammatory responses and in the immune response: suppresses TNF-induced NF-kappa-B activation, and activates AP-1. Binds to dendritic cells (DCs) via C1QR1, resulting in down-regulation of T-lymphocytes proliferation. Alters lipid metabolism by interacting with hepatocellular proteins involved in lipid accumulation and storage. Induces up-regulation of FAS promoter activity, and thereby contributes to the increased triglyceride accumulation in hepatocytes (steatosis). Forms a heterodimer with envelope glycoprotein E2, which mediates virus attachment to the host cell, virion internalization through clathrin-dependent endocytosis and fusion with host membrane. Fusion with the host cell is most likely mediated by both E1 and E2, through conformational rearrangements of the heterodimer required for fusion rather than a classical class II fusion mechanism. E1/E2 heterodimer binds host apolipoproteins such as APOB and ApoE thereby forming a lipo-viro-particle (LVP). APOE associated to the LVP allows the initial virus attachment to cell surface receptors such as the heparan sulfate proteoglycans (HSPGs), syndecan-1 (SDC1), syndecan-1 (SDC2), the low-density lipoprotein receptor (LDLR) and scavenger receptor class B type I (SCARB1). The cholesterol transfer activity of SCARB1 allows E2 exposure and binding of E2 to SCARB1 and the tetraspanin CD81. E1/E2 heterodimer binding on CD81 activates the epithelial growth factor receptor (EGFR) signaling pathway. Diffusion of the complex E1-E2-EGFR-SCARB1-CD81 to the cell lateral membrane allows further interaction with Claudin 1 (CLDN1) and occludin (OCLN) to finally trigger HCV entry. Functionally, forms a heterodimer with envelope glycoprotein E1, which mediates virus attachment to the host cell, virion internalization through clathrin-dependent endocytosis and fusion with host membrane. Fusion with the host cell is most likely mediated by both E1 and E2, through conformational rearrangements of the heterodimer required for fusion rather than a classical class II fusion mechanism. The interaction between envelope glycoprotein E2 and host apolipoprotein E/APOE allows the proper assembly, maturation and infectivity of the viral particles. This interaction is probably promoted via the up-regulation of cellular autophagy by the virus. E1/E2 heterodimer binds host apolipoproteins such as APOB and APOE thereby forming a lipo-viro-particle (LVP). APOE associated to the LVP allows the initial virus attachment to cell surface receptors such as the heparan sulfate proteoglycans (HSPGs), syndecan-1 (SDC1), syndecan-1 (SDC2), the low-density lipoprotein receptor (LDLR) and scavenger receptor class B type I (SCARB1). The cholesterol transfer activity of SCARB1 allows E2 exposure and binding of E2 to SCARB1 and the tetraspanin CD81. E1/E2 heterodimer binding on CD81 activates the epithelial growth factor receptor (EGFR) signaling pathway. Diffusion of the complex E1-E2-EGFR-SCARB1-CD81 to the cell lateral membrane allows further interaction with Claudin 1 (CLDN1) and occludin (OCLN) to finally trigger HCV entry. Inhibits host EIF2AK2/PKR activation, preventing the establishment of an antiviral state. Viral ligand for CD209/DC-SIGN and CLEC4M/DC-SIGNR, which are respectively found on dendritic cells (DCs), and on liver sinusoidal endothelial cells and macrophage-like cells of lymph node sinuses. These interactions allow the capture of circulating HCV particles by these cells and subsequent facilitated transmission to permissive cells such as hepatocytes and lymphocyte subpopulations. The interaction between E2 and host amino acid transporter complex formed by SLC3A2 and SLC7A5/LAT1 may facilitate viral entry into host cell. Its function is as follows. Ion channel protein that acts as a viroporin and plays an essential role in the assembly, envelopment and secretion of viral particles. Regulates the host cell secretory pathway, which induces the intracellular retention of viral glycoproteins and favors assembly of viral particles. Creates a pore in acidic organelles and releases Ca(2+) and H(+) in the cytoplasm of infected cells, leading to a productive viral infection. High levels of cytoplasmic Ca(2+) may trigger membrane trafficking and transport of viral ER-associated proteins to viroplasms, sites of viral genome replication. This ionic imbalance induces the assembly of the inflammasome complex, which triggers the maturation of pro-IL-1beta into IL-1beta through the action of caspase-1. Targets also host mitochondria and induces mitochondrial depolarization. In addition of its role as a viroporin, acts as a lipid raft adhesion factor. In terms of biological role, cysteine protease required for the proteolytic auto-cleavage between the non-structural proteins NS2 and NS3. The N-terminus of NS3 is required for the function of NS2 protease (active region NS2-3). Promotes the initiation of viral particle assembly by mediating the interaction between structural and non-structural proteins. Displays three enzymatic activities: serine protease with a chymotrypsin-like fold, NTPase and RNA helicase. NS3 serine protease, in association with NS4A, is responsible for the cleavages of NS3-NS4A, NS4A-NS4B, NS4B-NS5A and NS5A-NS5B. The NS3/NS4A complex prevents phosphorylation of host IRF3, thus preventing the establishment of dsRNA induced antiviral state. The NS3/NS4A complex induces host amino acid transporter component SLC3A2, thus contributing to HCV propagation. NS3 RNA helicase binds to RNA and unwinds both dsDNA and dsRNA in the 3' to 5' direction, and likely resolves RNA complicated stable secondary structures in the template strand. Binds a single ATP and catalyzes the unzipping of a single base pair of dsRNA. Inhibits host antiviral proteins TBK1 and IRF3 thereby preventing the establishment of an antiviral state. Cleaves host MAVS/CARDIF thereby preventing the establishment of an antiviral state. Cleaves host TICAM1/TRIF, thereby disrupting TLR3 signaling and preventing the establishment of an antiviral state. Functionally, induces a specific membrane alteration that serves as a scaffold for the virus replication complex. This membrane alteration gives rise to the so-called ER-derived membranous web that contains the replication complex. NS4B self-interaction contributes to its function in membranous web formation. Promotes host TRIF protein degradation in a CASP8-dependent manner thereby inhibiting host TLR3-mediated interferon signaling. Disrupts the interaction between STING and TBK1 contributing to the inhibition of interferon signaling. Its function is as follows. Phosphorylated protein that is indispensable for viral replication and assembly. Both hypo- and hyperphosphorylated states are required for the viral life cycle. The hyperphosphorylated form of NS5A is an inhibitor of viral replication. Involved in RNA-binding and especially in binding to the viral genome. Zinc is essential for RNA-binding. Participates in the viral particle production as a result of its interaction with the mature viral core protein. Its interaction with host VAPB may target the viral replication complex to vesicles. Down-regulates viral IRES translation initiation. Mediates interferon resistance, presumably by interacting with and inhibiting host EIF2AK2/PKR. Prevents BIN1-induced apoptosis. Acts as a transcriptional activator of some host genes important for viral replication when localized in the nucleus. Via the interaction with host PACSIN2, modulates lipid droplet formation in order to promote virion assembly. Modulates TNFRSF21/DR6 signaling pathway for viral propagation. In terms of biological role, RNA-dependent RNA polymerase that performs primer-template recognition and RNA synthesis during viral replication. Initiates RNA transcription/replication at a flavin adenine dinucleotide (FAD), resulting in a 5'- FAD cap on viral RNAs. In this way, recognition of viral 5' RNA by host pattern recognition receptors can be bypassed, thereby evading activation of antiviral pathways. The polypeptide is Genome polyprotein (Hepatitis C virus genotype 1c (isolate India) (HCV)).